Reading from the N-terminus, the 96-residue chain is Evasin P1078 (96 aa).

The signal sequence occupies residues 1–28 (MAFNTITFLQWAVFVAILFNMNLHSASA). 3 disulfides stabilise this stretch: C48–C67, C52–C69, and C63–C80. N-linked (GlcNAc...) asparagine glycosylation occurs at N51. A glycan (N-linked (GlcNAc...) asparagine) is linked at N74.

It is found in the secreted. In terms of biological role, salivary chemokine-binding protein which binds to host chemokines CXCL1, CXCL2, CXCL3, CXCL5, CXCL6, CXCL11 and CXCL13. This is Evasin P1078 from Ixodes ricinus (Common tick).